The chain runs to 1117 residues: Protein rliB (1117 aa).

The N-terminal stretch at 1-23 (MKNINNKILKIFILFLAICSVKS) is a signal peptide. N-linked (GlcNAc...) asparagine glycosylation is found at asparagine 136, asparagine 195, asparagine 279, and asparagine 318. The G8 domain occupies 266–392 (STWSNNLVPQ…YHNSWTKLAS (127 aa)). PbH1 repeat units follow at residues 522-544 (VQKSYISDCVVTKSYYRCYTIHG) and 545-567 (TNNLTLTRNVAFDVNGHCYYLED). 2 N-linked (GlcNAc...) asparagine glycosylation sites follow: asparagine 547 and asparagine 605. The stretch at 621-642 (NAYNTIIGNSASGGWAGFSFPN) is one PbH1 3 repeat. 6 N-linked (GlcNAc...) asparagine glycosylation sites follow: asparagine 728, asparagine 845, asparagine 1030, asparagine 1044, asparagine 1091, and asparagine 1107.

The protein belongs to the comF family.

The protein localises to the secreted. The chain is Protein rliB (rliB) from Dictyostelium discoideum (Social amoeba).